Reading from the N-terminus, the 294-residue chain is Acetyl-coenzyme A carboxylase carboxyl transferase subunit beta (294 aa).

The CoA carboxyltransferase N-terminal domain occupies 30–294; it reads IMTKCPECKK…PGVGGEVDGE (265 aa). Residues Cys-34, Cys-37, Cys-53, and Cys-56 each coordinate Zn(2+). The C4-type zinc finger occupies 34–56; that stretch reads CPECKKIMYTKELQKNLMVCNYC.

This sequence belongs to the AccD/PCCB family. In terms of assembly, acetyl-CoA carboxylase is a heterohexamer composed of biotin carboxyl carrier protein (AccB), biotin carboxylase (AccC) and two subunits each of ACCase subunit alpha (AccA) and ACCase subunit beta (AccD). Zn(2+) is required as a cofactor.

It localises to the cytoplasm. It carries out the reaction N(6)-carboxybiotinyl-L-lysyl-[protein] + acetyl-CoA = N(6)-biotinyl-L-lysyl-[protein] + malonyl-CoA. It participates in lipid metabolism; malonyl-CoA biosynthesis; malonyl-CoA from acetyl-CoA: step 1/1. Its function is as follows. Component of the acetyl coenzyme A carboxylase (ACC) complex. Biotin carboxylase (BC) catalyzes the carboxylation of biotin on its carrier protein (BCCP) and then the CO(2) group is transferred by the transcarboxylase to acetyl-CoA to form malonyl-CoA. In Listeria monocytogenes serovar 1/2a (strain ATCC BAA-679 / EGD-e), this protein is Acetyl-coenzyme A carboxylase carboxyl transferase subunit beta.